The following is an 87-amino-acid chain: Small ribosomal subunit protein bS20 (87 aa).

The disordered stretch occupies residues 1–26 (MANTAQAKKRVRQNIKQRERNSGLRS).

The protein belongs to the bacterial ribosomal protein bS20 family.

Its function is as follows. Binds directly to 16S ribosomal RNA. The sequence is that of Small ribosomal subunit protein bS20 from Nitrosomonas eutropha (strain DSM 101675 / C91 / Nm57).